Consider the following 676-residue polypeptide: DNA ligase (676 aa).

Residues Asp35–Asp39, Ser84–Leu85, and Glu118 contribute to the NAD(+) site. The N6-AMP-lysine intermediate role is filled by Lys120. NAD(+) contacts are provided by Arg141, Glu176, Lys284, and Lys308. The Zn(2+) site is built by Cys402, Cys405, Cys420, and Cys426. Residues Ser595–Asn676 enclose the BRCT domain.

Belongs to the NAD-dependent DNA ligase family. LigA subfamily. Mg(2+) serves as cofactor. Requires Mn(2+) as cofactor.

The enzyme catalyses NAD(+) + (deoxyribonucleotide)n-3'-hydroxyl + 5'-phospho-(deoxyribonucleotide)m = (deoxyribonucleotide)n+m + AMP + beta-nicotinamide D-nucleotide.. In terms of biological role, DNA ligase that catalyzes the formation of phosphodiester linkages between 5'-phosphoryl and 3'-hydroxyl groups in double-stranded DNA using NAD as a coenzyme and as the energy source for the reaction. It is essential for DNA replication and repair of damaged DNA. In Ehrlichia chaffeensis (strain ATCC CRL-10679 / Arkansas), this protein is DNA ligase.